A 434-amino-acid polypeptide reads, in one-letter code: Chaperone SurA (434 aa).

A signal peptide spans 1-22 (MKPSKHLIFALFALAISQPTMA). PpiC domains are found at residues 173-274 (DVEY…KIMD) and 283-383 (IEEV…QLEE).

The protein localises to the periplasm. It catalyses the reaction [protein]-peptidylproline (omega=180) = [protein]-peptidylproline (omega=0). In terms of biological role, chaperone involved in the correct folding and assembly of outer membrane proteins. Recognizes specific patterns of aromatic residues and the orientation of their side chains, which are found more frequently in integral outer membrane proteins. May act in both early periplasmic and late outer membrane-associated steps of protein maturation. The protein is Chaperone SurA of Shewanella sp. (strain MR-4).